Consider the following 146-residue polypeptide: Large ribosomal subunit protein uL11 (146 aa).

Belongs to the universal ribosomal protein uL11 family. In terms of assembly, part of the ribosomal stalk of the 50S ribosomal subunit. Interacts with L10 and the large rRNA to form the base of the stalk. L10 forms an elongated spine to which L12 dimers bind in a sequential fashion forming a multimeric L10(L12)X complex. One or more lysine residues are methylated.

Its function is as follows. Forms part of the ribosomal stalk which helps the ribosome interact with GTP-bound translation factors. This is Large ribosomal subunit protein uL11 from Wolbachia pipientis wMel.